A 255-amino-acid chain; its full sequence is 14-3-3 protein epsilon (255 aa).

An N-acetylmethionine modification is found at methionine 1. Lysine 50 is subject to N6-acetyllysine; alternate. Residue lysine 50 forms a Glycyl lysine isopeptide (Lys-Gly) (interchain with G-Cter in SUMO2); alternate linkage. Serine 65 bears the Phosphoserine mark. N6-acetyllysine is present on residues lysine 69, lysine 118, and lysine 123. At tyrosine 131 the chain carries Phosphotyrosine. Phosphothreonine is present on threonine 137. At serine 210 the chain carries Phosphoserine. Threonine 232 is modified (phosphothreonine). The segment at 234–255 (DMQGDGEEQNKEALQDVEDENQ) is disordered.

The protein belongs to the 14-3-3 family. In terms of assembly, homodimer. Heterodimerizes with YWHAZ. Interacts with PKA-phosphorylated AANAT. Interacts with ABL1 (phosphorylated form); the interaction retains it in the cytoplasm. Interacts with ARHGEF28. Interacts with BEX3. Weakly interacts with CDKN1B. Interacts with the 'Thr-369' phosphorylated form of DAPK2. Interacts with DENND1A. Interacts with GAB2. Interacts with phosphorylated GRB10. Interacts with KSR1. Interacts with NDEL1. Interacts with PI4KB, TBC1D22A and TBC1D22B. Interacts with the phosphorylated (by AKT1) form of SRPK2. Interacts with TIAM2. Interacts with the 'Ser-1134' and 'Ser-1161' phosphorylated form of SOS1. Interacts with ZFP36 (via phosphorylated form). Interacts with SLITRK1. Interacts with HSF1 (via phosphorylated form); this interaction promotes HSF1 sequestration in the cytoplasm in a ERK-dependent manner. Interacts with RIPOR2. Interacts with KLHL22; required for the nuclear localization of KLHL22 upon amino acid starvation. Interacts with CRTC1. Interacts with CRTC2 (probably when phosphorylated at 'Ser-171'). Interacts with CRTC3 (probably when phosphorylated at 'Ser-162' and/or 'Ser-273'). Interacts with ATP2B1 and ATP2B3; this interaction inhibits calcium-transporting ATPase activity. Interacts with MEFV. Interacts with RNF115. Interacts with GPR15; this interaction promotes ER-to-Golgi transport of GPR15.

It is found in the nucleus. The protein resides in the cytoplasm. The protein localises to the melanosome. Adapter protein implicated in the regulation of a large spectrum of both general and specialized signaling pathways. Binds to a large number of partners, usually by recognition of a phosphoserine or phosphothreonine motif. Binding generally results in the modulation of the activity of the binding partner. Positively regulates phosphorylated protein HSF1 nuclear export to the cytoplasm. This Rattus norvegicus (Rat) protein is 14-3-3 protein epsilon (Ywhae).